Consider the following 293-residue polypeptide: 4-hydroxy-tetrahydrodipicolinate synthase (293 aa).

Position 47 (threonine 47) interacts with pyruvate. Residue tyrosine 135 is the Proton donor/acceptor of the active site. Lysine 163 functions as the Schiff-base intermediate with substrate in the catalytic mechanism. Isoleucine 204 provides a ligand contact to pyruvate.

The protein belongs to the DapA family. As to quaternary structure, homotetramer; dimer of dimers.

It localises to the cytoplasm. It carries out the reaction L-aspartate 4-semialdehyde + pyruvate = (2S,4S)-4-hydroxy-2,3,4,5-tetrahydrodipicolinate + H2O + H(+). It participates in amino-acid biosynthesis; L-lysine biosynthesis via DAP pathway; (S)-tetrahydrodipicolinate from L-aspartate: step 3/4. Functionally, catalyzes the condensation of (S)-aspartate-beta-semialdehyde [(S)-ASA] and pyruvate to 4-hydroxy-tetrahydrodipicolinate (HTPA). The protein is 4-hydroxy-tetrahydrodipicolinate synthase of Brachyspira hyodysenteriae (strain ATCC 49526 / WA1).